The sequence spans 105 residues: MAAKIRREDEVIVLTGKDKGKRGKVTQVLIAKGKVIVEGINQVKKHQKPVPALGQAGGIVTKEAPIDVSNVALFNSATGKADRVGFRIEDGKKVRFFKSTGELVK.

It belongs to the universal ribosomal protein uL24 family. In terms of assembly, part of the 50S ribosomal subunit.

Its function is as follows. One of two assembly initiator proteins, it binds directly to the 5'-end of the 23S rRNA, where it nucleates assembly of the 50S subunit. Functionally, one of the proteins that surrounds the polypeptide exit tunnel on the outside of the subunit. In Aeromonas hydrophila subsp. hydrophila (strain ATCC 7966 / DSM 30187 / BCRC 13018 / CCUG 14551 / JCM 1027 / KCTC 2358 / NCIMB 9240 / NCTC 8049), this protein is Large ribosomal subunit protein uL24.